A 343-amino-acid polypeptide reads, in one-letter code: Heat-inducible transcription repressor HrcA (343 aa).

It belongs to the HrcA family.

In terms of biological role, negative regulator of class I heat shock genes (grpE-dnaK-dnaJ and groELS operons). Prevents heat-shock induction of these operons. The polypeptide is Heat-inducible transcription repressor HrcA (Mycobacterium ulcerans (strain Agy99)).